We begin with the raw amino-acid sequence, 233 residues long: uncharacterized protein (233 aa).

This sequence belongs to the asfivirus H233R family.

This is an uncharacterized protein from Ornithodoros (relapsing fever ticks).